The primary structure comprises 121 residues: MKYFKRLSDRERAIFEAGITLGAIYHQFCGTPVSPGTAEEVAKCIERAALLQPCVIDARVEVDVSSEDTDNYGGYTEVSGRNLRVTIVTRCGEWEAVGKLEFIEELNYPLMWVEEIRRVEQ.

Residues Glu-16 and Met-111 each coordinate substrate.

The protein belongs to the archaeal dihydroneopterin aldolase family. In terms of assembly, homotetramer.

The catalysed reaction is 7,8-dihydroneopterin = 6-hydroxymethyl-7,8-dihydropterin + glycolaldehyde. The protein operates within cofactor biosynthesis; 5,6,7,8-tetrahydromethanopterin biosynthesis. In terms of biological role, catalyzes the conversion of 7,8-dihydroneopterin (H2Neo) to 6-hydroxymethyl-7,8-dihydropterin (6-HMD). This chain is Dihydroneopterin aldolase, found in Methanopyrus kandleri (strain AV19 / DSM 6324 / JCM 9639 / NBRC 100938).